The chain runs to 409 residues: Probable tRNA pseudouridine synthase D (409 aa).

Catalysis depends on Asp-73, which acts as the Nucleophile. The 220-residue stretch at 146-365 (GFPNFFGDQR…SSGDRRIISA (220 aa)) folds into the TRUD domain.

This sequence belongs to the pseudouridine synthase TruD family.

It catalyses the reaction uridine(13) in tRNA = pseudouridine(13) in tRNA. Its function is as follows. Could be responsible for synthesis of pseudouridine from uracil-13 in transfer RNAs. The protein is Probable tRNA pseudouridine synthase D of Thermoplasma volcanium (strain ATCC 51530 / DSM 4299 / JCM 9571 / NBRC 15438 / GSS1).